A 227-amino-acid polypeptide reads, in one-letter code: MALLTDDFDAVVASRRAVRAFLPTPISRKLISEIIDIARLAPSNSNTQPWSIHVLTGEPKQALSALLGIAHNDPSADPLAHLPDDLARKYRERQEKWGELFYGLHQIDKCDDAGRARVSGLNFDFFGAPVGLIFTIDSNLKKYSWLDYGLFLQTLMLTARSRGLSTCPQVSFARFQSLIKDFLHLDDSQEIVCGMSLGYADENATVNSLRMPREMAQGFTHFMGFDR.

Residue R15 to R19 participates in FMN binding. NAD(+) contacts are provided by S45, Y102, and I107. Residue R213 coordinates FMN.

The protein belongs to the nitroreductase family. It depends on FMN as a cofactor.

It catalyses the reaction 4-nitrobenzoate + 2 NADH + 2 H(+) = 4-hydroxylaminobenzoate + 2 NAD(+) + H2O. Nitroreductase involved in the degradation of nitroaromatic compounds. Catalyzes the conversion of 4-nitrobenzoate to 4-hydroxylaminobenzoate. Required for the catabolism of 4-nitrotoluene. The chain is 4-nitrobenzoate reductase from Pseudomonas putida (Arthrobacter siderocapsulatus).